The sequence spans 185 residues: Protein TIFY 5 (185 aa).

Positions 38–72 constitute a Tify domain; it reads AAEARRNLTIFYNGRMCAVNVTELQARTIISMASQ. The interval 77-185 is disordered; the sequence is KQQQQQIQGR…RAAAPLYARR (109 aa). The segment covering 137–157 has biased composition (low complexity); sequence PRAGLQAAAAAAPTMNQPPAA. Positions 155 to 182 match the Jas motif; the sequence is PAASGLSMKRSLQRFLEKRKTRAAAPLY. Residues 162 to 169 carry the Nuclear localization signal motif; that stretch reads MKRSLQRF.

It belongs to the TIFY/JAZ family. Post-translationally, ubiquitinated. Targeted for degradation by the SCF(COI1) E3 ubiquitin ligase-proteasome pathway during jasmonate signaling.

The protein localises to the nucleus. Repressor of jasmonate responses. This Oryza sativa subsp. indica (Rice) protein is Protein TIFY 5.